The chain runs to 146 residues: Large ribosomal subunit protein uL23B (146 aa).

The segment at 1 to 22 (MAPSSNKVGKAIQAKKAVVKGS) is disordered.

It belongs to the universal ribosomal protein uL23 family.

Functionally, this protein binds to a specific region on the 26S rRNA. This chain is Large ribosomal subunit protein uL23B (rpl-23A.2), found in Caenorhabditis elegans.